A 429-amino-acid polypeptide reads, in one-letter code: Ribosomal RNA small subunit methyltransferase B (429 aa).

S-adenosyl-L-methionine is bound by residues 254 to 260 (CAAPGGK), D277, D303, and D322. C375 acts as the Nucleophile in catalysis.

This sequence belongs to the class I-like SAM-binding methyltransferase superfamily. RsmB/NOP family.

The protein localises to the cytoplasm. It carries out the reaction cytidine(967) in 16S rRNA + S-adenosyl-L-methionine = 5-methylcytidine(967) in 16S rRNA + S-adenosyl-L-homocysteine + H(+). Specifically methylates the cytosine at position 967 (m5C967) of 16S rRNA. The polypeptide is Ribosomal RNA small subunit methyltransferase B (Escherichia coli (strain UTI89 / UPEC)).